The following is a 452-amino-acid chain: tRNA modification GTPase MnmE (452 aa).

Residues R23, E80, and K119 each coordinate (6S)-5-formyl-5,6,7,8-tetrahydrofolate. One can recognise a TrmE-type G domain in the interval 215–374 (GIWIALVGQP…LQQGLLEMIG (160 aa)). Residue N225 participates in K(+) binding. GTP is bound by residues 225-230 (NVGKSS), 244-250 (TEVPGTT), and 269-272 (DTAG). Position 229 (S229) interacts with Mg(2+). Residues T244, V246, and T249 each contribute to the K(+) site. T250 lines the Mg(2+) pocket. K452 is a binding site for (6S)-5-formyl-5,6,7,8-tetrahydrofolate.

The protein belongs to the TRAFAC class TrmE-Era-EngA-EngB-Septin-like GTPase superfamily. TrmE GTPase family. In terms of assembly, homodimer. Heterotetramer of two MnmE and two MnmG subunits. K(+) serves as cofactor.

It is found in the cytoplasm. Exhibits a very high intrinsic GTPase hydrolysis rate. Involved in the addition of a carboxymethylaminomethyl (cmnm) group at the wobble position (U34) of certain tRNAs, forming tRNA-cmnm(5)s(2)U34. In Nitrosospira multiformis (strain ATCC 25196 / NCIMB 11849 / C 71), this protein is tRNA modification GTPase MnmE.